A 325-amino-acid chain; its full sequence is Tetraacyldisaccharide 4'-kinase (325 aa).

55–62 contacts ATP; the sequence is TAGGNGKT.

The protein belongs to the LpxK family.

It carries out the reaction a lipid A disaccharide + ATP = a lipid IVA + ADP + H(+). It participates in glycolipid biosynthesis; lipid IV(A) biosynthesis; lipid IV(A) from (3R)-3-hydroxytetradecanoyl-[acyl-carrier-protein] and UDP-N-acetyl-alpha-D-glucosamine: step 6/6. In terms of biological role, transfers the gamma-phosphate of ATP to the 4'-position of a tetraacyldisaccharide 1-phosphate intermediate (termed DS-1-P) to form tetraacyldisaccharide 1,4'-bis-phosphate (lipid IVA). The sequence is that of Tetraacyldisaccharide 4'-kinase from Salmonella dublin (strain CT_02021853).